The primary structure comprises 378 residues: MEYSHLYQKILSNLNNNNKLNCIFCKDEVFQVEWPGHLTLCCQLTIEYIKIINSPTQTINNINDDNKKLKIEKIENNYKQNLISNCTLCTEPIRLHNYIHHTNECISFIKNNFRQYLIDQIEYANIDNNSNTLNETINNNFIKNTTTTTTTTATTSNNRFNNNNSNNNNINNNNDNNNKEQKKESRCRELLVKKEKEPTSEVKKSNIDKNKNKKEQECIKIKELNDNRKMNFGHTKSQVNLQRVEICIFFNRCSDECGKPIRGKNKKLDLFSFVIGIGNEILKICRFSHFHSKDFYRLFYKDYYDKSIDIPNEIIDEKCIGIHCTGDTKNFNCTKHIYFSRNSISQIKFYFCSIYCLMDTIKSYDLEHLENFKKIMDD.

Residues 150 to 176 (TTTATTSNNRFNNNNSNNNNINNNNDN) show a composition bias toward low complexity. The segment at 150–187 (TTTATTSNNRFNNNNSNNNNINNNNDNNNKEQKKESRC) is disordered. Over residues 177-187 (NNKEQKKESRC) the composition is skewed to basic and acidic residues.

This is an uncharacterized protein from Dictyostelium discoideum (Social amoeba).